The following is a 456-amino-acid chain: Bifunctional protein GlmU (456 aa).

A pyrophosphorylase region spans residues 1-228 (MPQNTLNIVI…SHLAAGVNNK (228 aa)). Residues 11–14 (LAAG), Lys-25, Gln-75, 80–81 (GT), 102–104 (YGD), Gly-138, Glu-153, Asn-168, and Asn-226 each bind UDP-N-acetyl-alpha-D-glucosamine. Asp-104 provides a ligand contact to Mg(2+). Asn-226 is a Mg(2+) binding site. A linker region spans residues 229-249 (LQLAELERIFQTGQAQELLKA). The segment at 250–456 (GVTLHDPARF…GWVRPEKDKQ (207 aa)) is N-acetyltransferase. 2 residues coordinate UDP-N-acetyl-alpha-D-glucosamine: Arg-332 and Lys-350. His-362 (proton acceptor) is an active-site residue. UDP-N-acetyl-alpha-D-glucosamine is bound by residues Tyr-365 and Asn-376. Residues Ala-379, 385–386 (NY), Ser-404, Ala-422, and Arg-439 contribute to the acetyl-CoA site.

In the N-terminal section; belongs to the N-acetylglucosamine-1-phosphate uridyltransferase family. This sequence in the C-terminal section; belongs to the transferase hexapeptide repeat family. Homotrimer. Mg(2+) is required as a cofactor.

The protein localises to the cytoplasm. It carries out the reaction alpha-D-glucosamine 1-phosphate + acetyl-CoA = N-acetyl-alpha-D-glucosamine 1-phosphate + CoA + H(+). It catalyses the reaction N-acetyl-alpha-D-glucosamine 1-phosphate + UTP + H(+) = UDP-N-acetyl-alpha-D-glucosamine + diphosphate. The protein operates within nucleotide-sugar biosynthesis; UDP-N-acetyl-alpha-D-glucosamine biosynthesis; N-acetyl-alpha-D-glucosamine 1-phosphate from alpha-D-glucosamine 6-phosphate (route II): step 2/2. It participates in nucleotide-sugar biosynthesis; UDP-N-acetyl-alpha-D-glucosamine biosynthesis; UDP-N-acetyl-alpha-D-glucosamine from N-acetyl-alpha-D-glucosamine 1-phosphate: step 1/1. Its pathway is bacterial outer membrane biogenesis; LPS lipid A biosynthesis. Its function is as follows. Catalyzes the last two sequential reactions in the de novo biosynthetic pathway for UDP-N-acetylglucosamine (UDP-GlcNAc). The C-terminal domain catalyzes the transfer of acetyl group from acetyl coenzyme A to glucosamine-1-phosphate (GlcN-1-P) to produce N-acetylglucosamine-1-phosphate (GlcNAc-1-P), which is converted into UDP-GlcNAc by the transfer of uridine 5-monophosphate (from uridine 5-triphosphate), a reaction catalyzed by the N-terminal domain. This chain is Bifunctional protein GlmU, found in Neisseria meningitidis serogroup C (strain 053442).